A 2974-amino-acid chain; its full sequence is Mediator of RNA polymerase II transcription subunit 13 (2974 aa).

Composition is skewed to basic and acidic residues over residues 284 to 299 (EKEPENVTEERQKTPE), 340 to 367 (MFEPDLRQDKPKEETAAEKEKRMAAREV), 374 to 390 (RREERRREMEKQRRADD), and 624 to 633 (SREKRKEYQP). Disordered regions lie at residues 284 to 309 (EKEPENVTEERQKTPEAEPPAPPQTT), 340 to 394 (MFEP…NLED), 624 to 654 (SREKRKEYQPYHRKRPAKSVKEKKKKAKRKV), 677 to 749 (FNAW…FADI), 764 to 801 (LYNPAGGDIEEGDETSNESPDEKTPEGSPNGSPRPKEE), 1032 to 1063 (PHGSFDHDSEPEFDEQRTGLGEGTSDQYQDGE), 1099 to 1134 (GMLSPPASNEMPKGGPLSVGPASIESQGLNQIYPTP), 1140 to 1159 (LQADASQAHSPSIGGKFRST), 1281 to 1342 (TLAR…TPTY), 1416 to 1486 (QGGL…DATA), 2052 to 2078 (ELKKADEHPAPPSTQSENSEGNAATPA), and 2247 to 2309 (QDEA…PAGM). A coiled-coil region spans residues 351–396 (KEETAAEKEKRMAAREVRRLRRQRREERRREMEKQRRADDNLEDYD). 2 stretches are compositionally biased toward basic residues: residues 634 to 654 (YHRKRPAKSVKEKKKKAKRKV) and 677 to 688 (FNAWKQKKKGPP). Residues 689–717 (PKKDLAKKEAAADKDKDKDKEKDKEKDKD) are compositionally biased toward basic and acidic residues. Over residues 1035 to 1048 (SFDHDSEPEFDEQR) the composition is skewed to basic and acidic residues. Composition is skewed to polar residues over residues 1122 to 1134 (IESQGLNQIYPTP) and 1140 to 1149 (LQADASQAHS). Composition is skewed to pro residues over residues 1284-1299 (RPPPGATSPLPPPTPM) and 1326-1340 (PAYPPTPGPYPPTTP). Polar residues predominate over residues 1443 to 1464 (IRNTDAPNDPTVSKLQSAVSRN). Residues 1473 to 1486 (AATSIPTATDDATA) show a composition bias toward low complexity. Positions 2064–2073 (STQSENSEGN) are enriched in polar residues. Residues 2220 to 2301 (AVEGRLKRQK…EQYPAEESQA (82 aa)) adopt a coiled-coil conformation. Composition is skewed to basic and acidic residues over residues 2247–2258 (QDEADKREKMDE) and 2281–2292 (EEKKRNKQKENE). A mediates transcriptional repression region spans residues 2347–2974 (WKQRDTRVQN…LYHSVARLLV (628 aa)).

This sequence belongs to the Mediator complex subunit 13 family. In terms of assembly, component of the Mediator complex.

The protein resides in the nucleus. In terms of biological role, component of the Mediator complex, a coactivator involved in regulated gene transcription of nearly all RNA polymerase II-dependent genes. Mediator functions as a bridge to convey information from gene-specific regulatory proteins to the basal RNA polymerase II transcription machinery. Mediator is recruited to promoters by direct interactions with regulatory proteins and serves as a scaffold for the assembly of a functional preinitiation complex with RNA polymerase II and the general transcription factors. The protein is Mediator of RNA polymerase II transcription subunit 13 (let-19) of Caenorhabditis briggsae.